Consider the following 611-residue polypeptide: Developmental and secondary metabolism regulator veA (611 aa).

3 disordered regions span residues 1–57 (MNRK…RPVD), 222–497 (RRRE…ASFD), and 511–611 (LEAS…PGHA). Positions 14–23 (KSSATRTTND) are enriched in polar residues. A Velvet domain is found at 24-216 (GRAITYEMQV…AEQGCRVRIR (193 aa)). Positions 38 to 43 (QRARAC) match the Nuclear localization signal motif. The span at 242-254 (AARARASATPDPS) shows a compositional bias: low complexity. A compositionally biased stretch (polar residues) spans 274–290 (SASNASHQSLGSISRRP). Residues 330-340 (YPPNQFVQQQP) show a composition bias toward low complexity. A compositionally biased stretch (pro residues) spans 341-361 (PMQPPLPQYQPPNYPAPPPPV). Residues 362–377 (TAAQQPQPAQSYYNYP) show a composition bias toward low complexity. Polar residues predominate over residues 419–434 (RNSQQIPPTSQPTAYT). 2 stretches are compositionally biased toward low complexity: residues 435 to 452 (QPMQ…QHYQ) and 461 to 471 (QASQHSSYSSM). The segment at 455-499 (PPPPPSQASQHSSYSSMDLYNSRPAPIEPHHHGNTPASKASFDLP) is PEST. Over residues 511–533 (LEASSPTSVAPTNAYFSGGQTPI) the composition is skewed to polar residues.

Belongs to the velvet family. VeA subfamily. In terms of assembly, component of the heterotrimeric velvet complex composed of laeA, veA and velB; VeA acting as a bridging protein between laeA and velB.

The protein resides in the nucleus. It localises to the cytoplasm. In terms of biological role, component of the velvet transcription factor complex that controls sexual/asexual developmental ratio in response to light, promoting sexual development in the darkness while stimulating asexual sporulation under illumination. The velvet complex hat acts as a global regulator for secondary metabolite gene expression. Controls the expression of the dothistromin gene cluster. Regulates hyphal growth and pigment formation. Acts as a positive regulator of virulence. This is Developmental and secondary metabolism regulator veA from Dothistroma septosporum (strain NZE10 / CBS 128990) (Red band needle blight fungus).